We begin with the raw amino-acid sequence, 143 residues long: 3-hydroxyacyl-[acyl-carrier-protein] dehydratase FabZ (143 aa).

Histidine 47 is a catalytic residue.

It belongs to the thioester dehydratase family. FabZ subfamily.

It localises to the cytoplasm. The catalysed reaction is a (3R)-hydroxyacyl-[ACP] = a (2E)-enoyl-[ACP] + H2O. Its function is as follows. Involved in unsaturated fatty acids biosynthesis. Catalyzes the dehydration of short chain beta-hydroxyacyl-ACPs and long chain saturated and unsaturated beta-hydroxyacyl-ACPs. This chain is 3-hydroxyacyl-[acyl-carrier-protein] dehydratase FabZ, found in Rickettsia canadensis (strain McKiel).